Reading from the N-terminus, the 700-residue chain is Putative cysteine-rich receptor-like protein kinase 30 (700 aa).

The N-terminal stretch at 1–24 is a signal peptide; sequence MRQNNLFSLIFWLVPVSLIIVVSA. Gnk2-homologous domains lie at 25–129 and 135–250; these read QLCS…NQPS and LESV…LYPF. The Extracellular portion of the chain corresponds to 25–285; it reads QLCSEKFGTF…KDEKTIHTGT (261 aa). N-linked (GlcNAc...) asparagine glycans are attached at residues Asn63, Asn105, Asn146, Asn150, and Asn191. A helical membrane pass occupies residues 286–306; it reads IIGIVIVVAMVIIMALLALGV. The Cytoplasmic segment spans residues 307 to 700; that stretch reads SVCRSRKKYQ…SKSMYRNTED (394 aa). Residues 346-626 enclose the Protein kinase domain; it reads FLASNKIGQG…IFQMLTNSSI (281 aa). Residues 352–360 and Lys374 each bind ATP; that span reads IGQGGFGEV. Asp474 functions as the Proton acceptor in the catalytic mechanism. Ser478 is modified (phosphoserine). Thr514 is subject to Phosphothreonine. Phosphotyrosine is present on Tyr522.

The protein belongs to the protein kinase superfamily. Ser/Thr protein kinase family. CRK subfamily.

Its subcellular location is the membrane. It carries out the reaction L-seryl-[protein] + ATP = O-phospho-L-seryl-[protein] + ADP + H(+). The catalysed reaction is L-threonyl-[protein] + ATP = O-phospho-L-threonyl-[protein] + ADP + H(+). The sequence is that of Putative cysteine-rich receptor-like protein kinase 30 (CRK30) from Arabidopsis thaliana (Mouse-ear cress).